A 239-amino-acid chain; its full sequence is MRTLFIGDLHLSADRLDITQAFNRFLDTELDDADALYILGDLFEVWVGDDLAAPFALELARRLKQISQRLPIYFIHGNRDFMLGKQFADAAGMQILPEVTCLDLYGVNTVILHGDSMCTLDKAYQRFRKLRSFAFARWLYSCLPKRKRQAIADKIRSNSQSSNQQKSYVIMDVEPSAVDALFAQTHCKQMIHGHTHRPAIHNFTNGCKRIVVGDWYEQGSVLVVSADGVDLKSLPFDAS.

5 residues coordinate Mn(2+): Asp-8, His-10, Asp-41, Asn-78, and His-113. 78 to 79 (NR) provides a ligand contact to substrate. Substrate is bound by residues Asp-121, Ser-159, Asn-163, Lys-166, and His-194. Mn(2+) is bound by residues His-194 and His-196.

This sequence belongs to the LpxH family. It depends on Mn(2+) as a cofactor.

It localises to the cell inner membrane. The catalysed reaction is UDP-2-N,3-O-bis[(3R)-3-hydroxytetradecanoyl]-alpha-D-glucosamine + H2O = 2-N,3-O-bis[(3R)-3-hydroxytetradecanoyl]-alpha-D-glucosaminyl 1-phosphate + UMP + 2 H(+). Its pathway is glycolipid biosynthesis; lipid IV(A) biosynthesis; lipid IV(A) from (3R)-3-hydroxytetradecanoyl-[acyl-carrier-protein] and UDP-N-acetyl-alpha-D-glucosamine: step 4/6. Its function is as follows. Hydrolyzes the pyrophosphate bond of UDP-2,3-diacylglucosamine to yield 2,3-diacylglucosamine 1-phosphate (lipid X) and UMP by catalyzing the attack of water at the alpha-P atom. Involved in the biosynthesis of lipid A, a phosphorylated glycolipid that anchors the lipopolysaccharide to the outer membrane of the cell. The polypeptide is UDP-2,3-diacylglucosamine hydrolase (Shewanella sp. (strain MR-7)).